Reading from the N-terminus, the 204-residue chain is UPF0637 protein SA0957 (204 aa).

It belongs to the UPF0637 family.

This chain is UPF0637 protein SA0957, found in Staphylococcus aureus (strain N315).